Here is a 432-residue protein sequence, read N- to C-terminus: Elongation factor 1-gamma (432 aa).

The 82-residue stretch at 1–82 (LYTYPENWRA…YVSNEELRGS (82 aa)) folds into the GST N-terminal domain. A GST C-terminal domain is found at 83–211 (TPEAAAQVVQ…VKLCEKMAQF (129 aa)). N6-acetyllysine is present on residues Lys-142 and Lys-207. Positions 216-249 (FAESQPKKDTPRKEKGSREEKQKPQAERKEEKKA) are enriched in basic and acidic residues. Residues 216 to 258 (FAESQPKKDTPRKEKGSREEKQKPQAERKEEKKAAAPAPEEEL) form a disordered region. Lys-248 participates in a covalent cross-link: Glycyl lysine isopeptide (Lys-Gly) (interchain with G-Cter in SUMO1). An EF-1-gamma C-terminal domain is found at 271–432 (AKDPFAHLPK…KAFNQGKIFK (162 aa)). Residue Lys-280 forms a Glycyl lysine isopeptide (Lys-Gly) (interchain with G-Cter in SUMO2) linkage. Lys-396 carries the post-translational modification N6-acetyllysine. At Lys-429 the chain carries N6-acetyllysine; alternate. Lys-429 carries the N6-malonyllysine; alternate modification.

In terms of assembly, EF-1 is composed of four subunits: alpha, beta, delta, and gamma.

Functionally, probably plays a role in anchoring the complex to other cellular components. The protein is Elongation factor 1-gamma (EEF1G) of Sus scrofa (Pig).